The chain runs to 290 residues: Probable ATP-dependent kinase TDA10 (290 aa).

38 to 45 contributes to the ATP binding site; sequence GPQGSGKS.

It belongs to the GLYK kinase family.

The protein resides in the cytoplasm. It localises to the nucleus. In terms of biological role, ATP-dependent kinase whose specificity is not yet known. This chain is Probable ATP-dependent kinase TDA10 (TDA10), found in Saccharomyces cerevisiae (strain ATCC 204508 / S288c) (Baker's yeast).